Here is a 162-residue protein sequence, read N- to C-terminus: NADH-quinone oxidoreductase subunit I (162 aa).

2 4Fe-4S ferredoxin-type domains span residues 54 to 83 (RRYE…IESE) and 93 to 122 (TRYD…ETQI). Residues C63, C66, C69, C73, C102, C105, C108, and C112 each coordinate [4Fe-4S] cluster.

It belongs to the complex I 23 kDa subunit family. In terms of assembly, NDH-1 is composed of 14 different subunits. Subunits NuoA, H, J, K, L, M, N constitute the membrane sector of the complex. [4Fe-4S] cluster is required as a cofactor.

The protein localises to the cell inner membrane. It carries out the reaction a quinone + NADH + 5 H(+)(in) = a quinol + NAD(+) + 4 H(+)(out). Functionally, NDH-1 shuttles electrons from NADH, via FMN and iron-sulfur (Fe-S) centers, to quinones in the respiratory chain. The immediate electron acceptor for the enzyme in this species is believed to be ubiquinone. Couples the redox reaction to proton translocation (for every two electrons transferred, four hydrogen ions are translocated across the cytoplasmic membrane), and thus conserves the redox energy in a proton gradient. This Burkholderia ambifaria (strain MC40-6) protein is NADH-quinone oxidoreductase subunit I.